The primary structure comprises 1578 residues: Bromodomain-containing protein DDB_G0270170 (1578 aa).

Residues 1–12 (MSLEQQDETVVE) show a composition bias toward acidic residues. 4 disordered regions span residues 1–39 (MSLEQQDETVVEEETKTSFETNNSTANNTNNNTDNTYKE), 108–127 (NNNNGDENNKDIHDSSNNTE), 151–285 (HYSD…AKEL), and 319–454 (NENI…TTQT). Residues 18–35 (SFETNNSTANNTNNNTDN) are compositionally biased toward low complexity. Over residues 152-163 (YSDDESSKEKQD) the composition is skewed to basic and acidic residues. Low complexity-rich tracts occupy residues 164–185 (NINSNNNNNKNKNEQIINSENI) and 197–231 (TTPSDTPPTLTNNTSSTTTTTTTNNTTTAATTTTN). Composition is skewed to polar residues over residues 319 to 332 (NENIFSSSRKSTTK) and 340 to 351 (TASTTNTPIITA). Over residues 352-383 (QQNTTPLSPTQTTTTTTTPTTTTAQQNTPAQT) the composition is skewed to low complexity. Residues 384–395 (ESKPPTTISINI) show a composition bias toward polar residues. 2 stretches are compositionally biased toward low complexity: residues 396–407 (KGSKSPKTTGGK) and 417–433 (VVISQPVVPSTPVVATT). A compositionally biased stretch (polar residues) spans 443 to 454 (STANNNSETTQT). The stretch at 479 to 506 (SDSATIQQLQQSISMLEDKIRLISSNNK) forms a coiled coil. Disordered regions lie at residues 543-565 (FTKSSTLAPPSSERKYSNLYSDD) and 580-730 (IPIP…RMGK). Low complexity-rich tracts occupy residues 604 to 653 (NTST…PPQQ) and 660 to 686 (TQQENTSSTTTTTTTTTTTTNTEDTTT). In terms of domain architecture, Bromo spans 735 to 841 (VVLTPVFKRC…DVFEKGFPKV (107 aa)). Positions 851-903 (KNVDQEKIEKLSNDLKNVTKELEKFKKDDSNSINNNNNNNNNYNNNNNNNNNN) form a coiled coil. Disordered stretches follow at residues 874–969 (KFKK…KVTT), 1039–1167 (HALP…NNNN), 1184–1452 (SIPE…TDSA), and 1480–1544 (EREE…KGNM). Composition is skewed to low complexity over residues 881 to 911 (NSINNNNNNNNNYNNNNNNNNNNSSSSSSRS), 918 to 961 (SSGS…SSNN), and 1047 to 1061 (SSTHSSHSSSHDSSS). Residues 957–1039 (SSSNNKKYPK…QYKNGEIPQH (83 aa)) form the NET domain. A compositionally biased stretch (basic and acidic residues) spans 1064-1077 (REIEKLQKQLDRLG). Residues 1092–1107 (HSKRISKPISKARGRK) show a composition bias toward basic residues. Positions 1112–1167 (SSSNLNNSSNNINNNNNNINNYNNNNNYNNNNNNNLNNNNNNNINSNLNNNLNNNN) are enriched in low complexity. The stretch at 1113 to 1150 (SSNLNNSSNNINNNNNNINNYNNNNNYNNNNNNNLNNN) forms a coiled coil. Positions 1192–1204 (TDISESSDSESDS) are enriched in acidic residues. Composition is skewed to low complexity over residues 1205–1218 (ESGSSDSSSSYSDS) and 1231–1334 (YNNS…SLTN). A coiled-coil region spans residues 1280 to 1308 (NSNNNNSNNNNNNVNNNNNNHNNNNHNNN). A compositionally biased stretch (polar residues) spans 1356 to 1369 (SVASWSFDPTNNKE). The span at 1370-1386 (SSSSSSTSSTSSTSNTT) shows a compositional bias: low complexity. Polar residues predominate over residues 1387-1399 (LTPIIQQSSLTHA). Composition is skewed to low complexity over residues 1400–1424 (SSPISSSTFVSFSSSSSTPPTNNLS) and 1432–1451 (NSPSINSPSSPSANNNNTDS). A coiled-coil region spans residues 1462–1544 (TLKQKEKERV…EKLNNSKGNM (83 aa)). Over residues 1480-1538 (EREEKEEELKKEEEKKRIEMEEIKRLAKEKEEREAEETRKQIESERAAAREAREKEKLN) the composition is skewed to basic and acidic residues.

In Dictyostelium discoideum (Social amoeba), this protein is Bromodomain-containing protein DDB_G0270170.